Here is a 405-residue protein sequence, read N- to C-terminus: Tryptophan synthase beta chain (405 aa).

Position 98 is an N6-(pyridoxal phosphate)lysine (Lys98).

Belongs to the TrpB family. As to quaternary structure, tetramer of two alpha and two beta chains. Requires pyridoxal 5'-phosphate as cofactor.

The enzyme catalyses (1S,2R)-1-C-(indol-3-yl)glycerol 3-phosphate + L-serine = D-glyceraldehyde 3-phosphate + L-tryptophan + H2O. The protein operates within amino-acid biosynthesis; L-tryptophan biosynthesis; L-tryptophan from chorismate: step 5/5. Functionally, the beta subunit is responsible for the synthesis of L-tryptophan from indole and L-serine. The protein is Tryptophan synthase beta chain of Methylococcus capsulatus (strain ATCC 33009 / NCIMB 11132 / Bath).